Consider the following 404-residue polypeptide: Cytoplasmic tRNA 2-thiolation protein 2 (404 aa).

Belongs to the CTU2/NCS2 family.

It localises to the cytoplasm. Its pathway is tRNA modification; 5-methoxycarbonylmethyl-2-thiouridine-tRNA biosynthesis. Its function is as follows. Plays a central role in 2-thiolation of mcm(5)S(2)U at tRNA wobble positions of tRNA(Lys), tRNA(Glu) and tRNA(Gln). May act by forming a heterodimer with NCS6/CTU1 that ligates sulfur from thiocarboxylated URM1 onto the uridine of tRNAs at wobble position. The chain is Cytoplasmic tRNA 2-thiolation protein 2 from Drosophila mojavensis (Fruit fly).